Here is a 233-residue protein sequence, read N- to C-terminus: Large ribosomal subunit protein uL1 (233 aa).

Belongs to the universal ribosomal protein uL1 family. In terms of assembly, part of the 50S ribosomal subunit.

In terms of biological role, binds directly to 23S rRNA. The L1 stalk is quite mobile in the ribosome, and is involved in E site tRNA release. Functionally, protein L1 is also a translational repressor protein, it controls the translation of the L11 operon by binding to its mRNA. This is Large ribosomal subunit protein uL1 from Novosphingobium aromaticivorans (strain ATCC 700278 / DSM 12444 / CCUG 56034 / CIP 105152 / NBRC 16084 / F199).